The primary structure comprises 511 residues: Histidine ammonia-lyase (511 aa).

Residues 142–144 (ASG) constitute a cross-link (5-imidazolinone (Ala-Gly)). Residue serine 143 is modified to 2,3-didehydroalanine (Ser).

This sequence belongs to the PAL/histidase family. In terms of processing, contains an active site 4-methylidene-imidazol-5-one (MIO), which is formed autocatalytically by cyclization and dehydration of residues Ala-Ser-Gly.

It localises to the cytoplasm. The enzyme catalyses L-histidine = trans-urocanate + NH4(+). The protein operates within amino-acid degradation; L-histidine degradation into L-glutamate; N-formimidoyl-L-glutamate from L-histidine: step 1/3. The chain is Histidine ammonia-lyase from Phenylobacterium zucineum (strain HLK1).